A 169-amino-acid polypeptide reads, in one-letter code: S-ribosylhomocysteine lyase (169 aa).

Fe cation-binding residues include H54, H58, and C128.

The protein belongs to the LuxS family. As to quaternary structure, homodimer. Fe cation is required as a cofactor.

It catalyses the reaction S-(5-deoxy-D-ribos-5-yl)-L-homocysteine = (S)-4,5-dihydroxypentane-2,3-dione + L-homocysteine. In terms of biological role, involved in the synthesis of autoinducer 2 (AI-2) which is secreted by bacteria and is used to communicate both the cell density and the metabolic potential of the environment. The regulation of gene expression in response to changes in cell density is called quorum sensing. Catalyzes the transformation of S-ribosylhomocysteine (RHC) to homocysteine (HC) and 4,5-dihydroxy-2,3-pentadione (DPD). The protein is S-ribosylhomocysteine lyase of Shewanella loihica (strain ATCC BAA-1088 / PV-4).